Reading from the N-terminus, the 285-residue chain is HTH-type transcriptional regulator MurR (285 aa).

The region spanning 1-77 is the HTH rpiR-type domain; sequence MLYLTKISNA…MALIGEYSAS (77 aa). Residues 37–56 constitute a DNA-binding region (H-T-H motif); it reads SRQMAKQLGISQSSIVKFAQ. The region spanning 128–268 is the SIS domain; sequence IIEVISKAPF…FVGLVQLNDV (141 aa).

In terms of assembly, homotetramer.

It participates in amino-sugar metabolism; N-acetylmuramate degradation [regulation]. Represses the expression of the murPQ operon involved in the uptake and degradation of N-acetylmuramic acid (MurNAc). Binds to two adjacent inverted repeats within the operator region. MurNAc 6-phosphate, the substrate of MurQ, is the specific inducer that weakens binding of MurR to the operator. The chain is HTH-type transcriptional regulator MurR from Escherichia coli (strain K12 / MC4100 / BW2952).